A 402-amino-acid chain; its full sequence is 1-deoxy-D-xylulose 5-phosphate reductoisomerase (402 aa).

The NADPH site is built by T13, G14, S15, I16, and N126. K127 provides a ligand contact to 1-deoxy-D-xylulose 5-phosphate. An NADPH-binding site is contributed by E128. Position 152 (D152) interacts with Mn(2+). The 1-deoxy-D-xylulose 5-phosphate site is built by S153, E154, S188, and H211. E154 contributes to the Mn(2+) binding site. G217 lines the NADPH pocket. The 1-deoxy-D-xylulose 5-phosphate site is built by S224, N229, K230, and E233. E233 lines the Mn(2+) pocket.

This sequence belongs to the DXR family. Mg(2+) serves as cofactor. It depends on Mn(2+) as a cofactor.

The enzyme catalyses 2-C-methyl-D-erythritol 4-phosphate + NADP(+) = 1-deoxy-D-xylulose 5-phosphate + NADPH + H(+). It functions in the pathway isoprenoid biosynthesis; isopentenyl diphosphate biosynthesis via DXP pathway; isopentenyl diphosphate from 1-deoxy-D-xylulose 5-phosphate: step 1/6. Its function is as follows. Catalyzes the NADPH-dependent rearrangement and reduction of 1-deoxy-D-xylulose-5-phosphate (DXP) to 2-C-methyl-D-erythritol 4-phosphate (MEP). The polypeptide is 1-deoxy-D-xylulose 5-phosphate reductoisomerase (Psychrobacter arcticus (strain DSM 17307 / VKM B-2377 / 273-4)).